Reading from the N-terminus, the 459-residue chain is Siroheme synthase (459 aa).

Positions 1 to 204 are precorrin-2 dehydrogenase /sirohydrochlorin ferrochelatase; it reads MDHLPIFCQL…ADEKAVNATT (204 aa). NAD(+)-binding positions include 22 to 23 and 43 to 44; these read DV and LT. The residue at position 128 (Ser128) is a Phosphoserine. Residues 216-459 are uroporphyrinogen-III C-methyltransferase; that stretch reads GEVVLVGAGP…KLNWFSNYYD (244 aa). Pro225 lines the S-adenosyl-L-methionine pocket. The Proton acceptor role is filled by Asp248. Lys270 (proton donor) is an active-site residue. Residues 301–303, Ile306, 331–332, Met382, and Gly411 contribute to the S-adenosyl-L-methionine site; these read GGD and TA.

In the N-terminal section; belongs to the precorrin-2 dehydrogenase / sirohydrochlorin ferrochelatase family. It in the C-terminal section; belongs to the precorrin methyltransferase family.

It catalyses the reaction uroporphyrinogen III + 2 S-adenosyl-L-methionine = precorrin-2 + 2 S-adenosyl-L-homocysteine + H(+). The enzyme catalyses precorrin-2 + NAD(+) = sirohydrochlorin + NADH + 2 H(+). It carries out the reaction siroheme + 2 H(+) = sirohydrochlorin + Fe(2+). It functions in the pathway cofactor biosynthesis; adenosylcobalamin biosynthesis; precorrin-2 from uroporphyrinogen III: step 1/1. It participates in cofactor biosynthesis; adenosylcobalamin biosynthesis; sirohydrochlorin from precorrin-2: step 1/1. The protein operates within porphyrin-containing compound metabolism; siroheme biosynthesis; precorrin-2 from uroporphyrinogen III: step 1/1. Its pathway is porphyrin-containing compound metabolism; siroheme biosynthesis; siroheme from sirohydrochlorin: step 1/1. It functions in the pathway porphyrin-containing compound metabolism; siroheme biosynthesis; sirohydrochlorin from precorrin-2: step 1/1. Multifunctional enzyme that catalyzes the SAM-dependent methylations of uroporphyrinogen III at position C-2 and C-7 to form precorrin-2 via precorrin-1. Then it catalyzes the NAD-dependent ring dehydrogenation of precorrin-2 to yield sirohydrochlorin. Finally, it catalyzes the ferrochelation of sirohydrochlorin to yield siroheme. This Salmonella agona (strain SL483) protein is Siroheme synthase.